The following is a 353-amino-acid chain: Phosphoribosylformylglycinamidine cyclo-ligase (353 aa).

The protein belongs to the AIR synthase family.

The protein localises to the cytoplasm. It catalyses the reaction 2-formamido-N(1)-(5-O-phospho-beta-D-ribosyl)acetamidine + ATP = 5-amino-1-(5-phospho-beta-D-ribosyl)imidazole + ADP + phosphate + H(+). It functions in the pathway purine metabolism; IMP biosynthesis via de novo pathway; 5-amino-1-(5-phospho-D-ribosyl)imidazole from N(2)-formyl-N(1)-(5-phospho-D-ribosyl)glycinamide: step 2/2. This chain is Phosphoribosylformylglycinamidine cyclo-ligase, found in Pseudomonas aeruginosa (strain LESB58).